A 329-amino-acid chain; its full sequence is MNKKILATAVLGTGALSTLFAHQAEASTTHTVRSGESLWSISHHYGITVSKLKSLNGLSSNLIFPNQVLKVSGSSNYSSRSNYGNSSSTYTVRAGDSLSSIASRYGTTYRHIMNLNGLNSFLIFPGQQLKVSGSVSSNSHSSYNSNSGGSSSTYTVRYGDSLSSIASRYGTTYQHIMRLNGLNNFFIYPGQKLRVSGSASSNTYSTRSAQSTYYSSPVFNHRNLYDWGQCTWHVFNRRAAIGKGISTYWWNANNWDNAAARDGYRIDGNPTVGSIAQSDAGYYGHVAFVERVNSNGSILVSEMNFSASPGILTYRTIPAYQVRNYKFIH.

The first 26 residues, 1–26 (MNKKILATAVLGTGALSTLFAHQAEA), serve as a signal peptide directing secretion. LysM domains follow at residues 28–71 (TTHT…VLKV), 88–131 (STYT…QLKV), and 152–195 (STYT…KLRV). Residues 205–329 (STRSAQSTYY…YQVRNYKFIH (125 aa)) enclose the Peptidase C51 domain.

The protein resides in the secreted. Its subcellular location is the cell surface. It carries out the reaction Hydrolyzes the link between N-acetylmuramoyl residues and L-amino acid residues in certain cell-wall glycopeptides.. Peptidoglycan hydrolase involved in the splitting of the septum during cell division. The chain is N-acetylmuramoyl-L-alanine amidase sle1 (sle1) from Staphylococcus haemolyticus (strain JCSC1435).